We begin with the raw amino-acid sequence, 119 residues long: Thrombin-like enzyme TLBan (119 aa).

Residues 1–112 form the Peptidase S1 domain; that stretch reads VIGGDECNIN…YLLWIQSIIA (112 aa). Active-site charge relay system residues include H40 and D59. Cysteines 54 and 118 form a disulfide.

In terms of assembly, monomer. Contains both N-linked carbohydrates and sialic acid. In terms of tissue distribution, expressed by the venom gland.

Its subcellular location is the secreted. Strongly inhibited by PMSF and slightly inhibited by EDTA and soybean trypsin inhibitor. Its function is as follows. Thrombin-like snake venom serine protease, with high clotting activity in vitro. Also has fibrinogenolytic ability, showing a fast degradation of fibrinogen Aalpha chain (FGA), a slow degradation of Bbeta chain (FGB) and no degradation of gamma chain. Also causes platelet aggregation in platelet rich plasma (PRP) and washed platelet suspension. The chain is Thrombin-like enzyme TLBan from Bothrocophias andianus (Andean lancehead).